We begin with the raw amino-acid sequence, 300 residues long: FeMo cofactor biosynthesis protein NifB (300 aa).

A Radical SAM core domain is found at His24–Arg266. 3 residues coordinate [4Fe-4S] cluster: Cys38, Cys42, and Cys45. S-adenosyl-L-methionine is bound by residues Gly93, Thr144, and Ile196. [4Fe-4S] cluster-binding residues include Cys262 and Cys265.

This sequence belongs to the radical SAM superfamily. NifB family. Monomer. The cofactor is [4Fe-4S] cluster.

Its pathway is cofactor biosynthesis; Fe-Mo cofactor biosynthesis. Involved in the biosynthesis of the iron-molybdenum cofactor (FeMo-co or M-cluster) found in the dinitrogenase enzyme of the nitrogenase complex in nitrogen-fixing microorganisms. NifB catalyzes the crucial step of radical SAM-dependent carbide insertion that occurs concomitant with the insertion of a 9th sulfur and the rearrangement/coupling of two [4Fe-4S] clusters into a [8Fe-9S-C] cluster, the precursor to the M-cluster. This chain is FeMo cofactor biosynthesis protein NifB, found in Methanocaldococcus jannaschii (strain ATCC 43067 / DSM 2661 / JAL-1 / JCM 10045 / NBRC 100440) (Methanococcus jannaschii).